Consider the following 155-residue polypeptide: Aspartate carbamoyltransferase regulatory chain (155 aa).

C113, C118, C139, and C142 together coordinate Zn(2+).

Belongs to the PyrI family. As to quaternary structure, contains catalytic and regulatory chains. Requires Zn(2+) as cofactor.

Its function is as follows. Involved in allosteric regulation of aspartate carbamoyltransferase. The protein is Aspartate carbamoyltransferase regulatory chain of Methanospirillum hungatei JF-1 (strain ATCC 27890 / DSM 864 / NBRC 100397 / JF-1).